A 293-amino-acid chain; its full sequence is Small ribosomal subunit protein uS2m (293 aa).

Residues 21–38 (GRAAQRGRTLGSAAAAAA) are compositionally biased toward low complexity. Disordered stretches follow at residues 21-49 (GRAA…DRSA) and 263-293 (QGAP…GHSP). The segment covering 39–49 (REPERDSDRSA) has biased composition (basic and acidic residues). Over residues 267–279 (GPHPANPAAPGAP) the composition is skewed to pro residues.

Belongs to the universal ribosomal protein uS2 family. Component of the mitochondrial ribosome small subunit (28S) which comprises a 12S rRNA and about 30 distinct proteins.

It is found in the mitochondrion. Required for mitoribosome formation and stability, and mitochondrial translation. The polypeptide is Small ribosomal subunit protein uS2m (MRPS2) (Bos taurus (Bovine)).